We begin with the raw amino-acid sequence, 655 residues long: MEQPSILVKILHSIPHVNYTFRRVNDTFNPDSDVYLEPTNNKLQCQQKGIELQSLVILASIPAGLLIGSLLGLLLYLLTRCCDRRQRKPSAQRCQSCSLVIITLMTCAAIGLGLYGNDDFHNGLLQAFGSGKSVEGLVLTLKRQTESIKHDLETRMAGHKVEQLVEKPHYNQTVVMLLIETSRLVTENTSRAVASLDSMVHYFMKAKGSENDTSLMGLLQLGEFYESIRWPATLAFLTVLLLLCTVLVIGVARRSRCTLIFFSVSGLFCIIICWLLAGVYLASSVAAGDFCMRPHDYMCRQVGMRSPYVDFLNCGTPRNRFILRLNESRDLVDRARESVEHMQRMSQETYPHIDIQRTLNAMDNDLEITLRNLTTLSATLDRRTIDMHYEEALRGLCGGGLLGLSLMMVAGLLTSFLLTILVYADSHAWIYLTKRPTLDADKSETAPLFPASNAPSASISPTAPLSTGTINRTLLHHQQASSGGGSGTLPGSGGGAGAGGGVGANGHNGVGPYRNGSAGLRQGLASPSSQSSHTSSTATYNNGTTSYHNSHQQHNNHLYSNHYSHSNNHYNNTQHRTNPAAGAVAAAVGVVSSGQRSPSPPPVYDLVHGTRSGHHTLGRLPSHHQQSATYLPGPNNGKYATLSKQCKTLESNDFY.

Residues 1–54 (MEQPSILVKILHSIPHVNYTFRRVNDTFNPDSDVYLEPTNNKLQCQQKGIELQS) lie on the Extracellular side of the membrane. N-linked (GlcNAc...) asparagine glycans are attached at residues Asn-18 and Asn-25. Residues 55 to 75 (LVILASIPAGLLIGSLLGLLL) form a helical membrane-spanning segment. Topologically, residues 76–95 (YLLTRCCDRRQRKPSAQRCQ) are cytoplasmic. Residues 96–116 (SCSLVIITLMTCAAIGLGLYG) traverse the membrane as a helical segment. Over 117–231 (NDDFHNGLLQ…GEFYESIRWP (115 aa)) the chain is Extracellular. Residues Asn-171, Asn-188, and Asn-211 are each glycosylated (N-linked (GlcNAc...) asparagine). The helical transmembrane segment at 232–252 (ATLAFLTVLLLLCTVLVIGVA) threads the bilayer. The Cytoplasmic portion of the chain corresponds to 253-258 (RRSRCT). Residues 259–279 (LIFFSVSGLFCIIICWLLAGV) traverse the membrane as a helical segment. Topologically, residues 280-401 (YLASSVAAGD…ALRGLCGGGL (122 aa)) are extracellular. Residues Asn-326 and Asn-372 are each glycosylated (N-linked (GlcNAc...) asparagine). Residues 402–422 (LGLSLMMVAGLLTSFLLTILV) traverse the membrane as a helical segment. The Cytoplasmic segment spans residues 423–655 (YADSHAWIYL…CKTLESNDFY (233 aa)). Residues 446–576 (APLFPASNAP…NNHYNNTQHR (131 aa)) are disordered. A compositionally biased stretch (low complexity) spans 450-464 (PASNAPSASISPTAP). A compositionally biased stretch (polar residues) spans 465–480 (LSTGTINRTLLHHQQA). The span at 482–509 (SGGGSGTLPGSGGGAGAGGGVGANGHNG) shows a compositional bias: gly residues. Composition is skewed to low complexity over residues 526–539 (SPSS…STAT) and 546–576 (SYHN…TQHR). 2 positions are modified to phosphoserine: Ser-597 and Ser-599.

This sequence belongs to the tweety family.

The protein resides in the cell membrane. It catalyses the reaction chloride(in) = chloride(out). In terms of biological role, probable large-conductance Ca(2+)-activated chloride channel. Modulator of embryonic movement. This Drosophila melanogaster (Fruit fly) protein is Protein movement modulator.